We begin with the raw amino-acid sequence, 218 residues long: MQPKLVLENTIYTLEQLVSFNAPQIALAGRSNVGKSSLVNTLAGRKGLARTSSTPGKTRSINFYKVDPDGYYVVDLPGYGYARCSKAEREKWAKLIRRYLVETPAVCAIAILLDCRLSPQKLDVELAAFARQAGLPLLPVLTKADKCKQQERALRQREWRTILGGEVPLLFSSKTGMGKDKLWQELHRLAFPDMAFDTPSDGAPEPADEPEAASERAE.

The EngB-type G domain maps to 21–192; it reads NAPQIALAGR…WQELHRLAFP (172 aa). GTP-binding positions include 29–36, 56–60, 75–78, 142–145, and 171–173; these read GRSNVGKS, GKTRS, DLPG, TKAD, and FSS. Residues serine 36 and threonine 58 each coordinate Mg(2+). A disordered region spans residues 194–218; that stretch reads MAFDTPSDGAPEPADEPEAASERAE.

The protein belongs to the TRAFAC class TrmE-Era-EngA-EngB-Septin-like GTPase superfamily. EngB GTPase family. It depends on Mg(2+) as a cofactor.

Necessary for normal cell division and for the maintenance of normal septation. The chain is Probable GTP-binding protein EngB from Oleidesulfovibrio alaskensis (strain ATCC BAA-1058 / DSM 17464 / G20) (Desulfovibrio alaskensis).